The chain runs to 280 residues: Large ribosomal subunit protein uL2 (280 aa).

Residues 226–280 (NPIDHPHGGGEGRTSGGRHPVTPWGKPTKGAKTRNKKKASSQLIIRSRHAKKKGR) form a disordered region. 2 stretches are compositionally biased toward basic residues: residues 254-264 (KGAKTRNKKKA) and 271-280 (RSRHAKKKGR).

This sequence belongs to the universal ribosomal protein uL2 family. As to quaternary structure, part of the 50S ribosomal subunit. Forms a bridge to the 30S subunit in the 70S ribosome.

One of the primary rRNA binding proteins. Required for association of the 30S and 50S subunits to form the 70S ribosome, for tRNA binding and peptide bond formation. It has been suggested to have peptidyltransferase activity; this is somewhat controversial. Makes several contacts with the 16S rRNA in the 70S ribosome. In Roseobacter denitrificans (strain ATCC 33942 / OCh 114) (Erythrobacter sp. (strain OCh 114)), this protein is Large ribosomal subunit protein uL2.